The sequence spans 581 residues: Kelch-like protein 38 (581 aa).

Residues 34 to 101 enclose the BTB domain; it reads TDVSICSGAW…VYTGEVHISA (68 aa). The BACK domain maps to 136–237; that stretch reads CLGLVRLAEI…HPAFFHHFIA (102 aa). Kelch repeat units follow at residues 285–332, 334–383, 384–431, 433–479, 480–521, and 523–573; these read FLLL…TLHR, VYVL…THRN, FIFS…VKDQ, LYLF…VLGE, QIVI…VMGN, and LYVT…TLQC.

The chain is Kelch-like protein 38 (Klhl38) from Mus musculus (Mouse).